The following is a 98-amino-acid chain: UPF0358 protein LCA_1078 (98 aa).

Belongs to the UPF0358 family.

The chain is UPF0358 protein LCA_1078 from Latilactobacillus sakei subsp. sakei (strain 23K) (Lactobacillus sakei subsp. sakei).